The primary structure comprises 464 residues: Glutamate--tRNA ligase 1 (464 aa).

A 'HIGH' region motif is present at residues 8-18; the sequence is PSPTGHLHVGG. The short motif at 231 to 235 is the 'KMSKS' region element; it reads PLSKR. Residue lysine 234 participates in ATP binding.

Belongs to the class-I aminoacyl-tRNA synthetase family. Glutamate--tRNA ligase type 1 subfamily. In terms of assembly, monomer.

The protein resides in the cytoplasm. The enzyme catalyses tRNA(Glu) + L-glutamate + ATP = L-glutamyl-tRNA(Glu) + AMP + diphosphate. Functionally, catalyzes the attachment of glutamate to tRNA(Glu) in a two-step reaction: glutamate is first activated by ATP to form Glu-AMP and then transferred to the acceptor end of tRNA(Glu). This is Glutamate--tRNA ligase 1 from Thermotoga sp. (strain RQ2).